Here is a 405-residue protein sequence, read N- to C-terminus: MPDKTSYIFSNARIATLGENAEGLGLIDNAVLAVKDGKIAYVGPENALPAEYASFEKIDCENRLITPGLVDCHTHLVHAGNRAHEFELRLNGATYEEVARAGGGIVSSVKNLRAASEDDLVRETLPRLDALIAEGVTTVEVKSGYGLDRDSEIKSLKAARRLGEERDVTVRTTFLGAHALPPEMNGDKAAYIDRVINDMLPAIAAENLADAVDGFCEGIAFLPDEIARVFDAAKAHNIPVKLHADQLSNLHGAALAASYDALSADHLEYTDADGATAMAKAGTVAVLLPGAYYFIRETQKPPVELFRAAGTKMALATDNNPGTSPLTSLLLTMNMGATLFRMTVDECIAGVTREAARALGLLDQTGTLEIGKDADLAIWDVERPAELVYRIGFNPLWKRVFKGQI.

Positions 73 and 75 each coordinate Fe(3+). Residues His-73 and His-75 each coordinate Zn(2+). 4-imidazolone-5-propanoate contacts are provided by Arg-82, Tyr-145, and His-178. Tyr-145 provides a ligand contact to N-formimidoyl-L-glutamate. His-243 contacts Fe(3+). His-243 serves as a coordination point for Zn(2+). Residue Gln-246 participates in 4-imidazolone-5-propanoate binding. Asp-318 provides a ligand contact to Fe(3+). Residue Asp-318 coordinates Zn(2+). N-formimidoyl-L-glutamate-binding residues include Asn-320 and Gly-322. Residue Thr-323 coordinates 4-imidazolone-5-propanoate.

The protein belongs to the metallo-dependent hydrolases superfamily. HutI family. Zn(2+) serves as cofactor. Requires Fe(3+) as cofactor.

It is found in the cytoplasm. The enzyme catalyses 4-imidazolone-5-propanoate + H2O = N-formimidoyl-L-glutamate. Its pathway is amino-acid degradation; L-histidine degradation into L-glutamate; N-formimidoyl-L-glutamate from L-histidine: step 3/3. Its function is as follows. Catalyzes the hydrolytic cleavage of the carbon-nitrogen bond in imidazolone-5-propanoate to yield N-formimidoyl-L-glutamate. It is the third step in the universal histidine degradation pathway. The chain is Imidazolonepropionase from Brucella anthropi (strain ATCC 49188 / DSM 6882 / CCUG 24695 / JCM 21032 / LMG 3331 / NBRC 15819 / NCTC 12168 / Alc 37) (Ochrobactrum anthropi).